A 571-amino-acid polypeptide reads, in one-letter code: MRTSKYLLSTLKETPNDAEVVSHQLMLRAGMIRKLASGLYTWLPTGLRVLRKVENIVRQEIDNAGAIETLMPVVQPFELWEETGRSEKMGPELLRFTDRHVRPFVLSPTAEEVITALVRNEVSSYKQLPINLYQIQTKFRDERRPRFGVMRAREFCMMDAYSFDIDKAGLEKSYQAMHDAYCKAFDRMGLEYRPVLADSGAIGGNGSQEFHVLAESGEDLIAFSTESDYAANIEKAEAVAPAVERAAPTQEMTLVDTPNAKTIAELVEQHGISIEKTVKTLFVKASDAIEAPIVALIIRGDHELNEIKAENLAEVATPLEMATEEEMRELIGAGAGSLGPVGLKLPFIVDRSVAVMSDFGAGANIDGKHYFGINWGRDVELGQVADLRNVVEGDPSPCGKGTLMLKRGIEVGHIFQLGNVYSEAMNCGVLDSNGKNVILEMGCYGIGVSRVVAAAIEQNNDKYGIIWPDALAPFQVAIVPMNMHKSERVQEAAEKLYAELTAMGIEVLFDDRKERPGVMFSDMELIGIPHTIVIGDRSMDEGHFEYKNRRSGEKTPVAMADIVEYIKAQLE.

It belongs to the class-II aminoacyl-tRNA synthetase family. ProS type 1 subfamily. As to quaternary structure, homodimer.

The protein resides in the cytoplasm. The enzyme catalyses tRNA(Pro) + L-proline + ATP = L-prolyl-tRNA(Pro) + AMP + diphosphate. In terms of biological role, catalyzes the attachment of proline to tRNA(Pro) in a two-step reaction: proline is first activated by ATP to form Pro-AMP and then transferred to the acceptor end of tRNA(Pro). As ProRS can inadvertently accommodate and process non-cognate amino acids such as alanine and cysteine, to avoid such errors it has two additional distinct editing activities against alanine. One activity is designated as 'pretransfer' editing and involves the tRNA(Pro)-independent hydrolysis of activated Ala-AMP. The other activity is designated 'posttransfer' editing and involves deacylation of mischarged Ala-tRNA(Pro). The misacylated Cys-tRNA(Pro) is not edited by ProRS. This is Proline--tRNA ligase from Vibrio vulnificus (strain YJ016).